A 543-amino-acid polypeptide reads, in one-letter code: Carboxypeptidase Y homolog A (543 aa).

A signal peptide spans 1 to 17; the sequence is MRVLPATLLVGAATAAA. Positions 18–124 are excised as a propeptide; it reads PPFQQILGLP…KLEAYDLRVK (107 aa). Disulfide bonds link Cys-179–Cys-419, Cys-313–Cys-327, Cys-337–Cys-360, Cys-344–Cys-353, and Cys-382–Cys-389. A glycan (N-linked (GlcNAc...) asparagine) is linked at Asn-210. The active site involves Ser-266. Residue Asp-458 is part of the active site. Asn-509 carries N-linked (GlcNAc...) asparagine glycosylation. The active site involves His-520.

The protein belongs to the peptidase S10 family.

It is found in the vacuole. It catalyses the reaction Release of a C-terminal amino acid with broad specificity.. Its function is as follows. Vacuolar carboxypeptidase involved in degradation of small peptides. Digests preferentially peptides containing an aliphatic or hydrophobic residue in P1' position, as well as methionine, leucine or phenylalanine in P1 position of ester substrate. The sequence is that of Carboxypeptidase Y homolog A (cpyA) from Aspergillus fumigatus (strain ATCC MYA-4609 / CBS 101355 / FGSC A1100 / Af293) (Neosartorya fumigata).